A 141-amino-acid chain; its full sequence is Hemoglobin subunit alpha (141 aa).

The Globin domain occupies 1–141; it reads VLSSKDKANI…VSTVLTSKYR (141 aa). A Phosphoserine modification is found at S3. N6-succinyllysine occurs at positions 7 and 11. K16 carries the N6-acetyllysine; alternate modification. N6-succinyllysine; alternate is present on K16. Y24 carries the phosphotyrosine modification. K40 bears the N6-succinyllysine mark. Phosphoserine is present on S49. H58 contacts O2. H87 serves as a coordination point for heme b. S102 is subject to Phosphoserine. The residue at position 108 (T108) is a Phosphothreonine. The residue at position 124 (S124) is a Phosphoserine. Residues T134 and T137 each carry the phosphothreonine modification. The residue at position 138 (S138) is a Phosphoserine.

This sequence belongs to the globin family. As to quaternary structure, heterotetramer of two alpha chains and two beta chains. Red blood cells.

Its function is as follows. Involved in oxygen transport from the lung to the various peripheral tissues. Functionally, hemopressin acts as an antagonist peptide of the cannabinoid receptor CNR1. Hemopressin-binding efficiently blocks cannabinoid receptor CNR1 and subsequent signaling. This Vicugna pacos (Alpaca) protein is Hemoglobin subunit alpha (HBA).